The following is a 327-amino-acid chain: Mitochondrial coenzyme A transporter SLC25A42 (327 aa).

Solcar repeat units lie at residues 34 to 120 (KSIL…YKKL), 132 to 217 (LTPI…LKKL), and 227 to 315 (PYPF…TQIL). 6 helical membrane-spanning segments follow: residues 36–56 (ILNS…AVAP), 92–112 (LWRG…IQFC), 138–158 (LLAG…LDLV), 189–209 (LYRG…ISFF), 233–253 (LLFG…LDVV), and 296–316 (VKGP…QILL).

It belongs to the mitochondrial carrier (TC 2.A.29) family.

The protein localises to the mitochondrion inner membrane. It carries out the reaction ADP(out) + CoA(in) = ADP(in) + CoA(out). It catalyses the reaction 3'-dephospho-CoA(in) + ADP(out) = 3'-dephospho-CoA(out) + ADP(in). The catalysed reaction is adenosine 3',5'-bisphosphate(in) + ADP(out) = adenosine 3',5'-bisphosphate(out) + ADP(in). The enzyme catalyses AMP(in) + ADP(out) = AMP(out) + ADP(in). It carries out the reaction dADP(in) + ADP(out) = dADP(out) + ADP(in). It catalyses the reaction ADP(in) + ATP(out) = ADP(out) + ATP(in). Functionally, mitochondrial carrier mediating the transport of coenzyme A (CoA) in mitochondria in exchange for intramitochondrial (deoxy)adenine nucleotides and adenosine 3',5'-diphosphate. In Xenopus tropicalis (Western clawed frog), this protein is Mitochondrial coenzyme A transporter SLC25A42 (slc25a42).